A 557-amino-acid polypeptide reads, in one-letter code: Urocanate hydratase (557 aa).

Residues 53–54, Q131, 177–179, 197–202, 243–244, 264–268, 274–275, and 323–324 each bind NAD(+); these read GG, GMG, ECQQSR, NA, QTSAH, YL, and YG. C411 is a catalytic residue. NAD(+)-binding positions include 455–456 and G493; that span reads RE.

Homodimer. It depends on NAD(+) as a cofactor.

Its subcellular location is the cytoplasm. It catalyses the reaction 4-imidazolone-5-propanoate = trans-urocanate + H2O. The protein operates within amino-acid degradation; L-histidine degradation into L-glutamate; N-formimidoyl-L-glutamate from L-histidine: step 2/3. Functionally, catalyzes the conversion of urocanate to 4-imidazolone-5-propionate. The sequence is that of Urocanate hydratase from Pseudomonas putida (Arthrobacter siderocapsulatus).